The chain runs to 297 residues: Mitochondrial nicotinamide adenine dinucleotide transporter SLC25A52 (297 aa).

3 Solcar repeats span residues 28-108, 116-200, and 209-296; these read VGEM…LSCL, PEFA…IKEH, and AHLV…LLKF. The next 6 membrane-spanning stretches (helical) occupy residues 34–51, 85–105, 118–138, 179–199, 215–235, and 268–289; these read YLCGCCAAFNNVAITYPI, LPPLMQKTTTLALMFGLYEDL, FATHGVAAVLAGTAEAIFTPL, ILFRNGLSNVLFFGLRGPIKE, FIGGGLLGAMLGFLCFPINVV, and LFRGAHLNYHRSLISWGIINAT.

This sequence belongs to the mitochondrial carrier (TC 2.A.29) family.

The protein localises to the mitochondrion inner membrane. The enzyme catalyses NAD(+)(in) = NAD(+)(out). In terms of biological role, mitochondrial membrane carrier protein that mediates the import of NAD(+) into mitochondria. Compared to SLC25A51, SLC25A52-mediated transport is not essential for the import of NAD(+) in mitochondria. The transport mechanism, uniport or antiport, its electrogenicity and substrate selectivity, remain to be elucidated. The chain is Mitochondrial nicotinamide adenine dinucleotide transporter SLC25A52 from Homo sapiens (Human).